Here is a 42-residue protein sequence, read N- to C-terminus: Photosystem I reaction center subunit IX (42 aa).

The chain crosses the membrane as a helical span at residues 7–27; the sequence is YLSTAPVLATIWFIILAGLLI.

This sequence belongs to the PsaJ family.

It is found in the plastid. It localises to the chloroplast thylakoid membrane. Its function is as follows. May help in the organization of the PsaE and PsaF subunits. In Mesostigma viride (Green alga), this protein is Photosystem I reaction center subunit IX.